The sequence spans 130 residues: MARVIRKKPFVRRRPCQFCLKRQAVTYIDYKNEAELVRLVNMQGKILSSRITGTCARHQRAVALAIKRARYMAILPYIGLIKKDRDEIAQDQQKVEVKKMEESVKSAEPKATAEATEESKPKRTRKAKTE.

Composition is skewed to basic and acidic residues over residues 98-108 (KKMEESVKSAE) and 117-130 (EESK…AKTE). The tract at residues 98–130 (KKMEESVKSAEPKATAEATEESKPKRTRKAKTE) is disordered.

Belongs to the bacterial ribosomal protein bS18 family. As to quaternary structure, part of the 30S ribosomal subunit. Forms a tight heterodimer with protein bS6.

In terms of biological role, binds as a heterodimer with protein bS6 to the central domain of the 16S rRNA, where it helps stabilize the platform of the 30S subunit. This chain is Small ribosomal subunit protein bS18, found in Metamycoplasma arthritidis (strain 158L3-1) (Mycoplasma arthritidis).